A 437-amino-acid chain; its full sequence is Histidine--tRNA ligase (437 aa).

Belongs to the class-II aminoacyl-tRNA synthetase family. In terms of assembly, homodimer.

Its subcellular location is the cytoplasm. It carries out the reaction tRNA(His) + L-histidine + ATP = L-histidyl-tRNA(His) + AMP + diphosphate + H(+). This is Histidine--tRNA ligase from Opitutus terrae (strain DSM 11246 / JCM 15787 / PB90-1).